The following is a 327-amino-acid chain: GMP reductase (327 aa).

Cysteine 175 functions as the Thioimidate intermediate in the catalytic mechanism. 204–227 (IIADGGIRTHGDIAKSIRFGASMV) provides a ligand contact to NADP(+).

The protein belongs to the IMPDH/GMPR family. GuaC type 2 subfamily.

It carries out the reaction IMP + NH4(+) + NADP(+) = GMP + NADPH + 2 H(+). Functionally, catalyzes the irreversible NADPH-dependent deamination of GMP to IMP. It functions in the conversion of nucleobase, nucleoside and nucleotide derivatives of G to A nucleotides, and in maintaining the intracellular balance of A and G nucleotides. This is GMP reductase from Exiguobacterium sp. (strain ATCC BAA-1283 / AT1b).